We begin with the raw amino-acid sequence, 201 residues long: Holliday junction branch migration complex subunit RuvA (201 aa).

The tract at residues 1 to 65 is domain I; that stretch reads MIAYIEGRVA…EDALELYGFS (65 aa). A domain II region spans residues 66–143; sequence GWDERQTFLV…KVESLPASAG (78 aa). The flexible linker stretch occupies residues 143 to 147; the sequence is GLAAG. A domain III region spans residues 148–201; the sequence is VPGSVLRDAVQALGNLGYAEEEAAPVLKNILKQDPDLDVSEALRAALKALAKAR.

It belongs to the RuvA family. Homotetramer. Forms an RuvA(8)-RuvB(12)-Holliday junction (HJ) complex. HJ DNA is sandwiched between 2 RuvA tetramers; dsDNA enters through RuvA and exits via RuvB. An RuvB hexamer assembles on each DNA strand where it exits the tetramer. Each RuvB hexamer is contacted by two RuvA subunits (via domain III) on 2 adjacent RuvB subunits; this complex drives branch migration. In the full resolvosome a probable DNA-RuvA(4)-RuvB(12)-RuvC(2) complex forms which resolves the HJ.

Its subcellular location is the cytoplasm. Its function is as follows. The RuvA-RuvB-RuvC complex processes Holliday junction (HJ) DNA during genetic recombination and DNA repair, while the RuvA-RuvB complex plays an important role in the rescue of blocked DNA replication forks via replication fork reversal (RFR). RuvA specifically binds to HJ cruciform DNA, conferring on it an open structure. The RuvB hexamer acts as an ATP-dependent pump, pulling dsDNA into and through the RuvAB complex. HJ branch migration allows RuvC to scan DNA until it finds its consensus sequence, where it cleaves and resolves the cruciform DNA. The sequence is that of Holliday junction branch migration complex subunit RuvA from Oleidesulfovibrio alaskensis (strain ATCC BAA-1058 / DSM 17464 / G20) (Desulfovibrio alaskensis).